Reading from the N-terminus, the 274-residue chain is MDVVLLVKAAIMGVVEGLTEFLPISSTGHLILAGALLGFDDAKAQVFDVAIQTGAILAVILVYWAKIRATLHALPSERQAQRLAFNLAIGFFPAVLLGLLFGKAIKAHLFTPVVVASTFIIGGLVILWAERRAPAATRIHTLDAMTAPDALKVGLVQCLAMVPGTSRSGATIIGGMLLGLSRQAATDFSFFLAIPTLIGAGVYSLYQERALLTVADLPMFLTGLVFSFLSAWLCVRWLLRYIASHSFVPFAYYRIGFGLMVLVTASTGWVPWVD.

7 helical membrane-spanning segments follow: residues 21-39 (FLPI…LLGF), 44-64 (AQVF…LVYW), 85-105 (FNLA…GKAI), 109-129 (LFTP…ILWA), 185-205 (ATDF…VYSL), 214-234 (VADL…AWLC), and 247-267 (FVPF…TAST).

Belongs to the UppP family.

It localises to the cell inner membrane. It catalyses the reaction di-trans,octa-cis-undecaprenyl diphosphate + H2O = di-trans,octa-cis-undecaprenyl phosphate + phosphate + H(+). Its function is as follows. Catalyzes the dephosphorylation of undecaprenyl diphosphate (UPP). Confers resistance to bacitracin. The chain is Undecaprenyl-diphosphatase from Verminephrobacter eiseniae (strain EF01-2).